Reading from the N-terminus, the 449-residue chain is UDP-N-acetylmuramoylalanine--D-glutamate ligase (449 aa).

118 to 124 (GSNGKTT) contacts ATP.

It belongs to the MurCDEF family.

The protein localises to the cytoplasm. The catalysed reaction is UDP-N-acetyl-alpha-D-muramoyl-L-alanine + D-glutamate + ATP = UDP-N-acetyl-alpha-D-muramoyl-L-alanyl-D-glutamate + ADP + phosphate + H(+). The protein operates within cell wall biogenesis; peptidoglycan biosynthesis. Its function is as follows. Cell wall formation. Catalyzes the addition of glutamate to the nucleotide precursor UDP-N-acetylmuramoyl-L-alanine (UMA). This Oceanobacillus iheyensis (strain DSM 14371 / CIP 107618 / JCM 11309 / KCTC 3954 / HTE831) protein is UDP-N-acetylmuramoylalanine--D-glutamate ligase.